The following is a 496-amino-acid chain: ATP synthase subunit beta (496 aa).

ATP is bound at residue 155–162; it reads GGAGVGKT.

This sequence belongs to the ATPase alpha/beta chains family. F-type ATPases have 2 components, CF(1) - the catalytic core - and CF(0) - the membrane proton channel. CF(1) has five subunits: alpha(3), beta(3), gamma(1), delta(1), epsilon(1). CF(0) has three main subunits: a(1), b(2) and c(9-12). The alpha and beta chains form an alternating ring which encloses part of the gamma chain. CF(1) is attached to CF(0) by a central stalk formed by the gamma and epsilon chains, while a peripheral stalk is formed by the delta and b chains.

The protein localises to the cell membrane. It catalyses the reaction ATP + H2O + 4 H(+)(in) = ADP + phosphate + 5 H(+)(out). In terms of biological role, produces ATP from ADP in the presence of a proton gradient across the membrane. The catalytic sites are hosted primarily by the beta subunits. In Karelsulcia muelleri (strain GWSS) (Sulcia muelleri), this protein is ATP synthase subunit beta.